The primary structure comprises 184 residues: Ribosome-recycling factor (184 aa).

This sequence belongs to the RRF family.

It is found in the cytoplasm. Its function is as follows. Responsible for the release of ribosomes from messenger RNA at the termination of protein biosynthesis. May increase the efficiency of translation by recycling ribosomes from one round of translation to another. The chain is Ribosome-recycling factor from Leptospira borgpetersenii serovar Hardjo-bovis (strain JB197).